A 210-amino-acid polypeptide reads, in one-letter code: Probable nicotinate-nucleotide adenylyltransferase (210 aa).

The protein belongs to the NadD family.

The catalysed reaction is nicotinate beta-D-ribonucleotide + ATP + H(+) = deamido-NAD(+) + diphosphate. It functions in the pathway cofactor biosynthesis; NAD(+) biosynthesis; deamido-NAD(+) from nicotinate D-ribonucleotide: step 1/1. In terms of biological role, catalyzes the reversible adenylation of nicotinate mononucleotide (NaMN) to nicotinic acid adenine dinucleotide (NaAD). The polypeptide is Probable nicotinate-nucleotide adenylyltransferase (Streptococcus pyogenes serotype M6 (strain ATCC BAA-946 / MGAS10394)).